The sequence spans 354 residues: MKSLLLLVLISICGADHRSDNYTLDHDRVIHIQAENGPRLLVEAEQAKVFSHRGGNVTLPCKFLRDPTAFGSGTHKIRIKWTKLTSDYLKEVDVFVSMGYHKKTYGGYQGRVFLKGGSDNDASLVITDLTLDDYGRYKCEVIEGLEDDTAVVALDLQGVVFPYFPRLGRYNLNFHEAQQACLDQDAVIASFDQLYDAWRGGLDWCNAGWLSDGSVQYPITKPREPCGGQNTVPGVRNYGFWDKEKSRYDVFCFTSNFNGRFYYLIHPTKLTYDEAVQACLKDGAQIAKVGQIFAAWKLLGYDRCDAGWLADGSVRYPISRPRRRCSPTEAAVRFVGFPDKKHKLYGVYCFRAYN.

The propeptide occupies 1 to 15 (MKSLLLLVLISICGA). Asn21 and Asn56 each carry an N-linked (GlcNAc...) asparagine glycan. The 115-residue stretch at 38–152 (PRLLVEAEQA…EGLEDDTAVV (115 aa)) folds into the Ig-like V-type domain. Disulfide bonds link Cys61/Cys139, Cys181/Cys252, Cys205/Cys226, Cys279/Cys349, and Cys304/Cys325. Link domains follow at residues 159–254 (VVFP…FCFT) and 259–351 (GRFY…YCFR).

Belongs to the HAPLN family.

The protein localises to the secreted. It is found in the extracellular space. Its subcellular location is the extracellular matrix. Functionally, stabilizes the aggregates of proteoglycan monomers with hyaluronic acid in the extracellular cartilage matrix. This chain is Hyaluronan and proteoglycan link protein 1 (HAPLN1), found in Equus caballus (Horse).